Reading from the N-terminus, the 426-residue chain is Diaminobutyrate--2-oxoglutarate transaminase (426 aa).

Lys272 carries the post-translational modification N6-(pyridoxal phosphate)lysine.

The protein belongs to the class-III pyridoxal-phosphate-dependent aminotransferase family. The cofactor is pyridoxal 5'-phosphate.

It carries out the reaction L-2,4-diaminobutanoate + 2-oxoglutarate = L-aspartate 4-semialdehyde + L-glutamate. It participates in amine and polyamine biosynthesis; ectoine biosynthesis; L-ectoine from L-aspartate 4-semialdehyde: step 1/3. Catalyzes reversively the conversion of L-aspartate beta-semialdehyde (ASA) to L-2,4-diaminobutyrate (DABA) by transamination with L-glutamate. In Sporosarcina pasteurii (Bacillus pasteurii), this protein is Diaminobutyrate--2-oxoglutarate transaminase (ectB).